A 474-amino-acid chain; its full sequence is Probable threonine--tRNA ligase, mitochondrial (474 aa).

Residues 1–27 (MMKLKKFQLHTPFAHSCNRVEIYTARF) constitute a mitochondrion transit peptide.

The protein belongs to the class-II aminoacyl-tRNA synthetase family.

Its subcellular location is the mitochondrion matrix. It catalyses the reaction tRNA(Thr) + L-threonine + ATP = L-threonyl-tRNA(Thr) + AMP + diphosphate + H(+). This chain is Probable threonine--tRNA ligase, mitochondrial, found in Schizosaccharomyces pombe (strain 972 / ATCC 24843) (Fission yeast).